Here is a 328-residue protein sequence, read N- to C-terminus: DNA-directed RNA polymerase subunit alpha (328 aa).

The tract at residues 1-233 (MHNSATEFLK…EQLEAFIDLR (233 aa)) is alpha N-terminal domain (alpha-NTD). Positions 247–328 (FDPVLLRPVD…WPPVSILKND (82 aa)) are alpha C-terminal domain (alpha-CTD).

Belongs to the RNA polymerase alpha chain family. In terms of assembly, homodimer. The RNAP catalytic core consists of 2 alpha, 1 beta, 1 beta' and 1 omega subunit. When a sigma factor is associated with the core the holoenzyme is formed, which can initiate transcription.

The enzyme catalyses RNA(n) + a ribonucleoside 5'-triphosphate = RNA(n+1) + diphosphate. Its function is as follows. DNA-dependent RNA polymerase catalyzes the transcription of DNA into RNA using the four ribonucleoside triphosphates as substrates. The chain is DNA-directed RNA polymerase subunit alpha from Wigglesworthia glossinidia brevipalpis.